Here is a 250-residue protein sequence, read N- to C-terminus: MIAWLDPHDPFPPVERALGPATEAPGLLAASRDLSPQRLLLAYRQGIFPWYSVGQPVLWWSTDPRMVLAPQALKISATFRKTLRRVLRDPDWEIRVDDDFLAVMRACAMTPREGQDGTWITREIIAAYGALHSNGMAHSVETWYRGTRVGGLYGVALGRMFYGESMFAHRTDASKIALAALCAFLGSHGVPMIDCQQETDHLASLGARPIARAEFLAHVRNASAQPAITPWWFDKSVLERWTATPATPAV.

The protein belongs to the L/F-transferase family.

It localises to the cytoplasm. It catalyses the reaction N-terminal L-lysyl-[protein] + L-leucyl-tRNA(Leu) = N-terminal L-leucyl-L-lysyl-[protein] + tRNA(Leu) + H(+). It carries out the reaction N-terminal L-arginyl-[protein] + L-leucyl-tRNA(Leu) = N-terminal L-leucyl-L-arginyl-[protein] + tRNA(Leu) + H(+). The catalysed reaction is L-phenylalanyl-tRNA(Phe) + an N-terminal L-alpha-aminoacyl-[protein] = an N-terminal L-phenylalanyl-L-alpha-aminoacyl-[protein] + tRNA(Phe). Functions in the N-end rule pathway of protein degradation where it conjugates Leu, Phe and, less efficiently, Met from aminoacyl-tRNAs to the N-termini of proteins containing an N-terminal arginine or lysine. The polypeptide is Leucyl/phenylalanyl-tRNA--protein transferase (Cupriavidus pinatubonensis (strain JMP 134 / LMG 1197) (Cupriavidus necator (strain JMP 134))).